A 252-amino-acid chain; its full sequence is 5-oxoprolinase subunit A (252 aa).

This sequence belongs to the LamB/PxpA family. Forms a complex composed of PxpA, PxpB and PxpC.

The catalysed reaction is 5-oxo-L-proline + ATP + 2 H2O = L-glutamate + ADP + phosphate + H(+). Catalyzes the cleavage of 5-oxoproline to form L-glutamate coupled to the hydrolysis of ATP to ADP and inorganic phosphate. This Corynebacterium glutamicum (strain ATCC 13032 / DSM 20300 / JCM 1318 / BCRC 11384 / CCUG 27702 / LMG 3730 / NBRC 12168 / NCIMB 10025 / NRRL B-2784 / 534) protein is 5-oxoprolinase subunit A.